The sequence spans 227 residues: Terpene cyclase ltmB (227 aa).

Helical transmembrane passes span 20–40 (LAETFVTFMGLGWLINYVLMI), 51–71 (MALIPLCNNIAWELVYTIIYP), 76–96 (VELAAFIAGVTLNFLIMTSAA), 113–133 (AGLIIVAGILMCFTGHVALAM), 135–155 (IGPALAYSWGAVICQLALSIG), 173–195 (LWSSRFLGSCCAVGFAFLRWRYW), and 206–226 (LILWSLATFLVADLTYGVCLL).

Belongs to the paxB family.

Its subcellular location is the membrane. The protein operates within secondary metabolite biosynthesis. Terpene cyclase; part of the gene cluster that mediates the biosynthesis of lolitrems, indole-diterpene mycotoxins that are potent tremorgens in mammals, and are synthesized by clavicipitaceous fungal endophytes in association with their grass hosts. The geranylgeranyl diphosphate (GGPP) synthase ltmG is proposed to catalyze the first step in lolitrem biosynthesis. LtmG catalyzes a series of iterative condensations of isopentenyl diphosphate (IPP) with dimethylallyl diphosphate (DMAPP), geranyl diphosphate (GPP), and farnesyl diphosphate (FPP), to form GGPP. GGPP then condenses with indole-3-glycerol phosphate to form 3-geranylgeranylindole, an acyclic intermediate, to be incorporated into paxilline. Either ltmG or ltmC could be responsible for this step, as both are putative prenyl transferases. The FAD-dependent monooxygenase ltmM then catalyzes the epoxidation of the two terminal alkenes of the geranylgeranyl moiety, which is subsequently cyclized by ltmB, to paspaline. The cytochrome P450 monooxygenases ltmQ and ltmP can sequentially oxidize paspaline to terpendole E and terpendole F. Alternatively, ltmP converts paspaline to an intermediate which is oxidized by ltmQ to terpendole F. LtmF, ltmK, ltmE and ltmJ appear to be unique to the epichloe endophytes. The prenyltransferase ltmF is involved in the 27-hydroxyl-O-prenylation. The cytochrome P450 monooxygenase ltmK is required for the oxidative acetal ring formation. The multi-functional prenyltransferase ltmE is required for C20- and C21-prenylations of the indole ring of paspalanes and acts together with the cytochrome P450 monooxygenase ltmJ to yield lolitremanes by multiple oxidations and ring closures. The stereoisomer pairs of lolitriol and lolitrem N or lolitrem B and lolitrem F may be attributed to variations in the way in which ring closure can occur under the action of ltmJ. While the major product of this pathway is lolitrem B, the prenyl transferases and cytochrome P450 monooxygenases identified in this pathway have a remarkable versatility in their regio- and stereo-specificities to generate a diverse range of metabolites that are products of a metabolic grid rather than a linear pathway. The sequence is that of Terpene cyclase ltmB from Epichloe festucae var. lolii (Neotyphodium lolii).